The chain runs to 503 residues: D-alanine--D-alanyl carrier protein ligase (503 aa).

151 to 152 (TS) serves as a coordination point for ATP. Asp196 contributes to the D-alanine binding site. 291 to 296 (NTYGPT) lines the ATP pocket. Val300 is a D-alanine binding site. Asp382 and Lys491 together coordinate ATP. Residue Lys491 participates in D-alanine binding.

The protein belongs to the ATP-dependent AMP-binding enzyme family. DltA subfamily.

Its subcellular location is the cytoplasm. It carries out the reaction holo-[D-alanyl-carrier protein] + D-alanine + ATP = D-alanyl-[D-alanyl-carrier protein] + AMP + diphosphate. Its pathway is cell wall biogenesis; lipoteichoic acid biosynthesis. In terms of biological role, catalyzes the first step in the D-alanylation of lipoteichoic acid (LTA), the activation of D-alanine and its transfer onto the D-alanyl carrier protein (Dcp) DltC. In an ATP-dependent two-step reaction, forms a high energy D-alanyl-AMP intermediate, followed by transfer of the D-alanyl residue as a thiol ester to the phosphopantheinyl prosthetic group of the Dcp. D-alanylation of LTA plays an important role in modulating the properties of the cell wall in Gram-positive bacteria, influencing the net charge of the cell wall. This Bacillus velezensis (strain DSM 23117 / BGSC 10A6 / LMG 26770 / FZB42) (Bacillus amyloliquefaciens subsp. plantarum) protein is D-alanine--D-alanyl carrier protein ligase.